The following is a 500-amino-acid chain: Glycerol kinase (500 aa).

Position 13 (Thr13) interacts with ADP. Residues Thr13, Thr14, and Ser15 each coordinate ATP. Thr13 provides a ligand contact to sn-glycerol 3-phosphate. Position 17 (Arg17) interacts with ADP. Residues Arg83, Glu84, and Tyr135 each contribute to the sn-glycerol 3-phosphate site. The glycerol site is built by Arg83, Glu84, and Tyr135. At His231 the chain carries Phosphohistidine; by HPr. A sn-glycerol 3-phosphate-binding site is contributed by Asp245. Residues Asp245 and Gln246 each contribute to the glycerol site. The ADP site is built by Thr267 and Gly310. ATP-binding residues include Thr267, Gly310, Gln314, and Gly411. ADP is bound by residues Gly411 and Asn415.

Belongs to the FGGY kinase family. As to quaternary structure, homotetramer and homodimer (in equilibrium). The phosphoenolpyruvate-dependent sugar phosphotransferase system (PTS), including enzyme I, and histidine-containing protein (HPr) are required for the phosphorylation, which leads to the activation of the enzyme.

It carries out the reaction glycerol + ATP = sn-glycerol 3-phosphate + ADP + H(+). The protein operates within polyol metabolism; glycerol degradation via glycerol kinase pathway; sn-glycerol 3-phosphate from glycerol: step 1/1. With respect to regulation, activated by phosphorylation and inhibited by fructose 1,6-bisphosphate (FBP). Functionally, key enzyme in the regulation of glycerol uptake and metabolism. Catalyzes the phosphorylation of glycerol to yield sn-glycerol 3-phosphate. The sequence is that of Glycerol kinase from Oceanobacillus iheyensis (strain DSM 14371 / CIP 107618 / JCM 11309 / KCTC 3954 / HTE831).